A 117-amino-acid chain; its full sequence is Protein TCL1B2 (117 aa).

Belongs to the TCL1 family.

The sequence is that of Protein TCL1B2 (Tcl1b2) from Mus musculus (Mouse).